A 345-amino-acid chain; its full sequence is Phenylalanine--tRNA ligase alpha subunit (345 aa).

Residue Glu-255 participates in Mg(2+) binding.

The protein belongs to the class-II aminoacyl-tRNA synthetase family. Phe-tRNA synthetase alpha subunit type 1 subfamily. As to quaternary structure, tetramer of two alpha and two beta subunits. Mg(2+) is required as a cofactor.

The protein resides in the cytoplasm. It carries out the reaction tRNA(Phe) + L-phenylalanine + ATP = L-phenylalanyl-tRNA(Phe) + AMP + diphosphate + H(+). This Lysinibacillus sphaericus (strain C3-41) protein is Phenylalanine--tRNA ligase alpha subunit.